The sequence spans 212 residues: Protein-L-isoaspartate O-methyltransferase (212 aa).

The active site involves Ser-60.

The protein belongs to the methyltransferase superfamily. L-isoaspartyl/D-aspartyl protein methyltransferase family.

Its subcellular location is the cytoplasm. It catalyses the reaction [protein]-L-isoaspartate + S-adenosyl-L-methionine = [protein]-L-isoaspartate alpha-methyl ester + S-adenosyl-L-homocysteine. In terms of biological role, catalyzes the methyl esterification of L-isoaspartyl residues in peptides and proteins that result from spontaneous decomposition of normal L-aspartyl and L-asparaginyl residues. It plays a role in the repair and/or degradation of damaged proteins. This chain is Protein-L-isoaspartate O-methyltransferase, found in Pseudomonas entomophila (strain L48).